Here is a 728-residue protein sequence, read N- to C-terminus: Catalase-peroxidase (728 aa).

The N-terminal stretch at Met1–Gly16 is a signal peptide. Residues Met1–Asp26 form a disordered region. Residues Trp96–Tyr218 constitute a cross-link (tryptophyl-tyrosyl-methioninium (Trp-Tyr) (with M-244)). The Proton acceptor role is filled by His97. Positions Tyr218–Met244 form a cross-link, tryptophyl-tyrosyl-methioninium (Tyr-Met) (with W-96). His259 is a heme b binding site.

Belongs to the peroxidase family. Peroxidase/catalase subfamily. As to quaternary structure, homodimer or homotetramer. Requires heme b as cofactor. Formation of the three residue Trp-Tyr-Met cross-link is important for the catalase, but not the peroxidase activity of the enzyme.

It catalyses the reaction H2O2 + AH2 = A + 2 H2O. The enzyme catalyses 2 H2O2 = O2 + 2 H2O. In terms of biological role, bifunctional enzyme with both catalase and broad-spectrum peroxidase activity. The chain is Catalase-peroxidase from Rhizobium leguminosarum bv. phaseoli.